We begin with the raw amino-acid sequence, 585 residues long: Glycerol-3-phosphate acyltransferase 1 (585 aa).

A run of 3 helical transmembrane segments spans residues 126 to 146 (FFPYFMLVAFEGGSIIRAILL), 334 to 354 (TPLATLAMFIWLPIGFLLAVF), and 356 to 376 (ISVGVFLPYHVANFLASMSGV). The short motif at 403-408 (HRTLLD) is the HXXXXD motif element.

This sequence belongs to the GPAT/DAPAT family. In terms of tissue distribution, highly expressed in developing siliques and flower buds. Weakly or not expressed in roots, seedlings and leaves.

Its subcellular location is the membrane. The protein localises to the mitochondrion. It catalyses the reaction sn-glycerol 3-phosphate + an acyl-CoA = a 1-acyl-sn-glycero-3-phosphate + CoA. It functions in the pathway phospholipid metabolism; CDP-diacylglycerol biosynthesis; CDP-diacylglycerol from sn-glycerol 3-phosphate: step 1/3. Esterifies acyl-group from acyl-ACP to the sn-1 position of glycerol-3-phosphate, an essential step in glycerolipid biosynthesis. Involved in pollen development, by being required for tapetum differentiation and male fertility. In addition to the sporophytic effect, it also exerts a gametophytic effect on pollen performance. The protein is Glycerol-3-phosphate acyltransferase 1 (GPAT1) of Arabidopsis thaliana (Mouse-ear cress).